The primary structure comprises 361 residues: MGEPEPEQIRLKCVRKEGFFTVPPEHRLGRCRSVKEFEKLNRIGEGTYGIVYRARDTHTDEIVALKKVRMDKEKDGVPISSLREITLLLRLRHPNIVELKEVVVGNHLESIFLVMGYCEQDLASLLENMPTPFSEAQVKCIVLQVLRGLQYLHRNFIIHRDLKVSNLLMTDKGCVKTADFGLARAYGIPVKPMTPKVVTLWYRAPELLLGTTTQTTSIDMWAVGCILAELLAHKPLLPGTSEIHQVDLIVQLLGTPSENIWPGFSQLPLASQYSLRKQPYNNLKHKFPWLSEAGLRLMNLLFMYDPKKRATAGDCLESSYFKEKPLPCEPELMPTFPHHRNKRATPATSLGTESQSRRGRP.

A Protein kinase domain is found at 37 to 321 (FEKLNRIGEG…AGDCLESSYF (285 aa)). Residues 43 to 51 (IGEGTYGIV) and Lys66 contribute to the ATP site. The Proton acceptor role is filled by Asp161. At Thr194 the chain carries Phosphothreonine. A disordered region spans residues 332 to 361 (LMPTFPHHRNKRATPATSLGTESQSRRGRP).

It belongs to the protein kinase superfamily. CMGC Ser/Thr protein kinase family. CDC2/CDKX subfamily. In terms of assembly, heterodimer with CCNQ, the interaction is required for kinase activity. Interacts with ETS2. Interacts with PRK2.

It is found in the cytoplasm. Its subcellular location is the cytoskeleton. It localises to the cilium basal body. It carries out the reaction L-seryl-[protein] + ATP = O-phospho-L-seryl-[protein] + ADP + H(+). The catalysed reaction is L-threonyl-[protein] + ATP = O-phospho-L-threonyl-[protein] + ADP + H(+). Cyclin-dependent kinase that phosphorylates the transcription factor ETS2 (in vitro) and positively controls its proteasomal degradation (in cells). Involved in the regulation of actin cytoskeleton organization through the phosphorylation of actin dynamics regulators such as PKN2. Is a negative regulator of ciliogenesis through phosphorylation of PKN2 and promotion of RhoA signaling. This is Cyclin-dependent kinase 10 (CDK10) from Bos taurus (Bovine).